The chain runs to 137 residues: Nucleoside diphosphate kinase (137 aa).

6 residues coordinate ATP: K9, F57, R85, T91, R102, and N112. H115 (pros-phosphohistidine intermediate) is an active-site residue.

The protein belongs to the NDK family. In terms of assembly, homotetramer. Mg(2+) serves as cofactor.

Its subcellular location is the cytoplasm. The catalysed reaction is a 2'-deoxyribonucleoside 5'-diphosphate + ATP = a 2'-deoxyribonucleoside 5'-triphosphate + ADP. It carries out the reaction a ribonucleoside 5'-diphosphate + ATP = a ribonucleoside 5'-triphosphate + ADP. Major role in the synthesis of nucleoside triphosphates other than ATP. The ATP gamma phosphate is transferred to the NDP beta phosphate via a ping-pong mechanism, using a phosphorylated active-site intermediate. This is Nucleoside diphosphate kinase from Geotalea uraniireducens (strain Rf4) (Geobacter uraniireducens).